Reading from the N-terminus, the 797-residue chain is Protocadherin beta-11 (797 aa).

The first 26 residues, 1–26, serve as a signal peptide directing secretion; the sequence is MENGGTRTQQIRQVLLLFVLLGMSQA. Over 27–690 the chain is Extracellular; that stretch reads GSETWSFSVA…AQTDFLTVYL (664 aa). 5 Cadherin domains span residues 35–133, 138–242, 247–347, 352–451, and 456–561; these read VAEE…SPIF, MLLE…SPEF, YEVK…APEI, ITSP…APTF, and YTLF…SPFV. Asn-418, Asn-436, Asn-487, and Asn-567 each carry an N-linked (GlcNAc...) asparagine glycan. The region spanning 568 to 671 is the Cadherin 6 domain; it reads GSAPCTELVP…LVDGFSQPFL (104 aa). The chain crosses the membrane as a helical span at residues 691–711; the sequence is VVALASVSSLFFFSVLLFVAV. Residues 712 to 797 are Cytoplasmic-facing; it reads RLCRRSRAAS…TFQNSFGFNF (86 aa).

Its subcellular location is the cell membrane. Its function is as follows. Potential calcium-dependent cell-adhesion protein. May be involved in the establishment and maintenance of specific neuronal connections in the brain. The chain is Protocadherin beta-11 (PCDHB11) from Pan troglodytes (Chimpanzee).